A 323-amino-acid polypeptide reads, in one-letter code: Methionyl-tRNA formyltransferase (323 aa).

Residue 121-124 participates in (6S)-5,6,7,8-tetrahydrofolate binding; it reads SLLP.

Belongs to the Fmt family.

It catalyses the reaction L-methionyl-tRNA(fMet) + (6R)-10-formyltetrahydrofolate = N-formyl-L-methionyl-tRNA(fMet) + (6S)-5,6,7,8-tetrahydrofolate + H(+). In terms of biological role, attaches a formyl group to the free amino group of methionyl-tRNA(fMet). The formyl group appears to play a dual role in the initiator identity of N-formylmethionyl-tRNA by promoting its recognition by IF2 and preventing the misappropriation of this tRNA by the elongation apparatus. In Desulfotalea psychrophila (strain LSv54 / DSM 12343), this protein is Methionyl-tRNA formyltransferase.